Reading from the N-terminus, the 88-residue chain is Putative transposase InsN for insertion sequence element IS911B (88 aa).

The protein belongs to the transposase 8 family.

Involved in the transposition of the insertion sequence IS911. This is Putative transposase InsN for insertion sequence element IS911B (insN2) from Escherichia coli (strain K12).